The chain runs to 42 residues: Large ribosomal subunit protein bL34c (42 aa).

It belongs to the bacterial ribosomal protein bL34 family.

Its subcellular location is the plastid. It localises to the chloroplast. In Olisthodiscus luteus (Marine phytoflagellate), this protein is Large ribosomal subunit protein bL34c (rpl34).